The chain runs to 695 residues: Centrosomal protein kizuna (695 aa).

Residues 1-12 (MPRGRGGGGGGL) are compositionally biased toward gly residues. Residues 1–24 (MPRGRGGGGGGLRQASATSAPLAS) form a disordered region. Residues 15–24 (ASATSAPLAS) are compositionally biased toward low complexity. Coiled-coil stretches lie at residues 29–57 (ERVG…EYNK) and 102–132 (VEHL…LSKD). Disordered stretches follow at residues 261 to 313 (EIGS…SDRE), 351 to 391 (HSAW…SDLT), 444 to 465 (QSFP…EKVP), and 633 to 695 (SEAS…FYDT). Polar residues-rich tracts occupy residues 263–274 (GSSTQHSKSNLS) and 282–297 (LHSS…NSIT). 2 stretches are compositionally biased toward basic and acidic residues: residues 299–313 (LKCD…SDRE) and 360–377 (DLDH…KHEE). Over residues 382-391 (GSSCSSSDLT) the composition is skewed to low complexity. Thr391 carries the post-translational modification Phosphothreonine; by PLK1. Over residues 448-465 (DSKREPSPDSPRQPEKVP) the composition is skewed to basic and acidic residues. The span at 633–645 (SEASFSSSEGSPL) shows a compositional bias: low complexity. Phosphoserine is present on residues Ser667, Ser670, and Ser672. The span at 676–686 (AALRPRDHDMP) shows a compositional bias: basic and acidic residues.

It belongs to the kizuna family. As to quaternary structure, interacts with AKAP9, CEP72, ODF2, PCNT and TUBGCP2. Post-translationally, phosphorylation at Thr-391 by PLK1 is not needed for centrosomal localization or pericentriolar material expansion but is indispensable for spindle-pole stabilization.

It localises to the cytoplasm. The protein resides in the cytoskeleton. Its subcellular location is the microtubule organizing center. It is found in the centrosome. The protein localises to the cilium basal body. Functionally, centrosomal protein required for establishing a robust mitotic centrosome architecture that can endure the forces that converge on the centrosomes during spindle formation. Required for stabilizing the expanded pericentriolar material around the centriole. This chain is Centrosomal protein kizuna (Kiz), found in Mus musculus (Mouse).